The chain runs to 634 residues: Glutamyl-tRNA(Gln) amidotransferase subunit E (634 aa).

Belongs to the GatB/GatE family. GatE subfamily. In terms of assembly, heterodimer of GatD and GatE.

It carries out the reaction L-glutamyl-tRNA(Gln) + L-glutamine + ATP + H2O = L-glutaminyl-tRNA(Gln) + L-glutamate + ADP + phosphate + H(+). Functionally, allows the formation of correctly charged Gln-tRNA(Gln) through the transamidation of misacylated Glu-tRNA(Gln) in organisms which lack glutaminyl-tRNA synthetase. The reaction takes place in the presence of glutamine and ATP through an activated gamma-phospho-Glu-tRNA(Gln). The GatDE system is specific for glutamate and does not act on aspartate. The sequence is that of Glutamyl-tRNA(Gln) amidotransferase subunit E from Sulfolobus acidocaldarius (strain ATCC 33909 / DSM 639 / JCM 8929 / NBRC 15157 / NCIMB 11770).